A 142-amino-acid chain; its full sequence is Hemoglobin subunit alpha-A (142 aa).

The region spanning 2–142 is the Globin domain; that stretch reads VLSANDKTNV…VGNVLTAKYR (141 aa). His-59 provides a ligand contact to O2. Residue His-88 participates in heme b binding.

This sequence belongs to the globin family. As to quaternary structure, heterotetramer of two alpha chains and two beta chains. In terms of tissue distribution, red blood cells.

Its function is as follows. Involved in oxygen transport from the lung to the various peripheral tissues. This Aegypius monachus (Cinereous vulture) protein is Hemoglobin subunit alpha-A (HBAA).